A 1019-amino-acid polypeptide reads, in one-letter code: Photoactivated adenylate cyclase subunit alpha (1019 aa).

The 94-residue stretch at 55-148 (LRRLMYLSAS…GRMYGEWHMK (94 aa)) folds into the BLUF 1 domain. The Guanylate cyclase 1 domain maps to 204–332 (VVTFIYLVEF…DCINTASRIT (129 aa)). In terms of domain architecture, BLUF 2 spans 467–559 (LITLTYISQA…RVYGSPLDMT (93 aa)). The Guanylate cyclase 2 domain maps to 615–744 (VMLATDICSF…EVSARVMEVE (130 aa)). Residues 822 to 861 (GTNAPGRGAPAGGIPSSPKVRPPGRTNSVSSYTPDPNEAL) form a disordered region. Low complexity predominate over residues 825-839 (APGRGAPAGGIPSSP). Positions 846–855 (RTNSVSSYTP) are enriched in polar residues.

This sequence belongs to the adenylyl cyclase class-4/guanylyl cyclase family. As to quaternary structure, heterotetramer of two alpha and two beta subunits. The cofactor is FAD.

It localises to the cell projection. It is found in the cilium. The protein resides in the flagellum. The enzyme catalyses ATP = 3',5'-cyclic AMP + diphosphate. With respect to regulation, activity increased by up to 80-fold under blue light. Its function is as follows. Acts as a blue light photoreceptor for the step-up photophobic response. Mediates photoavoidance. The sequence is that of Photoactivated adenylate cyclase subunit alpha from Euglena gracilis.